The primary structure comprises 465 residues: GTPase Der (465 aa).

EngA-type G domains are found at residues 3 to 167 (PLVA…PEEG) and 179 to 352 (IRIA…ESAN). GTP contacts are provided by residues 9–16 (GRPNVGKS), 57–61 (DTGGI), 119–122 (NKID), 185–192 (GRPNVGKS), 232–236 (DTAGL), and 297–300 (NKWD). One can recognise a KH-like domain in the interval 353–437 (KTFTTSEVNK…PVSFIFREGT (85 aa)).

It belongs to the TRAFAC class TrmE-Era-EngA-EngB-Septin-like GTPase superfamily. EngA (Der) GTPase family. In terms of assembly, associates with the 50S ribosomal subunit.

In terms of biological role, GTPase that plays an essential role in the late steps of ribosome biogenesis. This Stenotrophomonas maltophilia (strain R551-3) protein is GTPase Der.